Consider the following 163-residue polypeptide: Adenosine 5'-monophosphoramidase HINT2 (163 aa).

A mitochondrion-targeting transit peptide spans 1 to 17 (MAAAVVLAAGLRAARRA). The region spanning 55–163 (IFSRILDKSL…GGRQLQWPPG (109 aa)) is the HIT domain. Residues serine 63 and aspartate 80 each coordinate AMP. An N6-acetyllysine modification is found at lysine 119. Asparagine 136 is a binding site for AMP. An N6-acetyllysine modification is found at lysine 139. AMP is bound by residues 142 to 145 (AQSV) and 149 to 151 (HIH). The Histidine triad motif motif lies at 147–151 (HLHIH). Residue histidine 149 is the Tele-AMP-histidine intermediate of the active site.

It belongs to the HINT family. High expression in liver and pancreas. Expression is significantly down-regulated in hepatocellular carcinoma (HCC) patients.

The protein localises to the mitochondrion. The catalysed reaction is adenosine 5'-phosphoramidate + H2O = AMP + NH4(+). Exhibits adenosine 5'-monophosphoramidase activity, hydrolyzing purine nucleotide phosphoramidates with a single phosphate group such as adenosine 5'monophosphoramidate (AMP-NH2) to yield AMP and NH2. Hydrolyzes adenosine 5'-O-p-nitrophenylphosphoramidate (AMP-pNA). Hydrolyzes fluorogenic purine nucleoside tryptamine phosphoramidates in vitro. May be involved in steroid biosynthesis. May play a role in apoptosis. The protein is Adenosine 5'-monophosphoramidase HINT2 of Homo sapiens (Human).